The primary structure comprises 502 residues: Hexokinase-4 (502 aa).

Residues 4-24 (VLVMLTAAAAVVACSVATVMV) form a helical membrane-spanning segment. One can recognise a Hexokinase domain in the interval 35–491 (RRVVGLLKDL…SSIGSALLLA (457 aa)). Residues 90-228 (NGSETGTYYA…GLDIRVAALV (139 aa)) are hexokinase small subdomain. Residues glycine 104 and serine 105 each coordinate ADP. Threonine 194, lysine 195, asparagine 229, and aspartate 230 together coordinate D-glucose. A hexokinase large subdomain region spans residues 229–480 (NDTVGALSFG…QHVVVKAMED (252 aa)). Threonine 253 is a binding site for ADP. Asparagine 256, glutamate 284, and glutamate 315 together coordinate D-glucose. Glycine 445 is a binding site for ADP.

It belongs to the hexokinase family.

It is found in the mitochondrion outer membrane. It carries out the reaction a D-hexose + ATP = a D-hexose 6-phosphate + ADP + H(+). The catalysed reaction is D-fructose + ATP = D-fructose 6-phosphate + ADP + H(+). It catalyses the reaction D-glucose + ATP = D-glucose 6-phosphate + ADP + H(+). It functions in the pathway carbohydrate metabolism; hexose metabolism. It participates in carbohydrate degradation; glycolysis; D-glyceraldehyde 3-phosphate and glycerone phosphate from D-glucose: step 1/4. In terms of biological role, fructose and glucose phosphorylating enzyme. May be involved in the phosphorylation of glucose during the export from mitochondrion to cytosol. This chain is Hexokinase-4, found in Arabidopsis thaliana (Mouse-ear cress).